We begin with the raw amino-acid sequence, 188 residues long: Peroxynitrite isomerase (188 aa).

Residues 35–41 (GTWRGEG) carry the GXWXGXG motif. Residue His178 participates in heme b binding.

Belongs to the nitrobindin family. Homodimer. Heme b serves as cofactor.

It catalyses the reaction peroxynitrite = nitrate. It participates in nitrogen metabolism. Its function is as follows. Heme-binding protein able to scavenge peroxynitrite and to protect free L-tyrosine against peroxynitrite-mediated nitration, by acting as a peroxynitrite isomerase that converts peroxynitrite to nitrate. Therefore, this protein likely plays a role in peroxynitrite sensing and in the detoxification of reactive nitrogen and oxygen species (RNS and ROS, respectively). Is able to bind nitric oxide (NO) in vitro, but may act as a sensor of peroxynitrite levels in vivo. In Frankia casuarinae (strain DSM 45818 / CECT 9043 / HFP020203 / CcI3), this protein is Peroxynitrite isomerase.